A 299-amino-acid polypeptide reads, in one-letter code: 4-hydroxy-tetrahydrodipicolinate synthase (299 aa).

A pyruvate-binding site is contributed by Thr44. Tyr133 acts as the Proton donor/acceptor in catalysis. Lys162 (schiff-base intermediate with substrate) is an active-site residue. Ile204 is a binding site for pyruvate.

Belongs to the DapA family. In terms of assembly, homotetramer; dimer of dimers.

It localises to the cytoplasm. It carries out the reaction L-aspartate 4-semialdehyde + pyruvate = (2S,4S)-4-hydroxy-2,3,4,5-tetrahydrodipicolinate + H2O + H(+). It participates in amino-acid biosynthesis; L-lysine biosynthesis via DAP pathway; (S)-tetrahydrodipicolinate from L-aspartate: step 3/4. Functionally, catalyzes the condensation of (S)-aspartate-beta-semialdehyde [(S)-ASA] and pyruvate to 4-hydroxy-tetrahydrodipicolinate (HTPA). This chain is 4-hydroxy-tetrahydrodipicolinate synthase, found in Thermus thermophilus (strain ATCC 27634 / DSM 579 / HB8).